A 521-amino-acid chain; its full sequence is Vang-like protein 2-A (521 aa).

Positions 1-81 are disordered; it reads MDNDSQYSGY…TTVVTGTSEH (81 aa). The Cytoplasmic portion of the chain corresponds to 1–108; it reads MDNDSQYSGY…AKLDCSRHLG (108 aa). Basic residues predominate over residues 15 to 33; sequence GHSRSSRKHRDRRERHRSK. Basic and acidic residues predominate over residues 57–67; it reads ESTRGEDRDDN. Positions 69–81 are enriched in low complexity; that stretch reads GETTTVVTGTSEH. The helical transmembrane segment at 109 to 129 threads the bilayer; the sequence is VVIGGALALLSFLTPIAFMLL. Over 130 to 147 the chain is Extracellular; it reads PQILWREDLEQCGTACEG. The helical transmembrane segment at 148–168 threads the bilayer; sequence LFISVAFKLLILLLGSWALFF. At 169–178 the chain is on the cytoplasmic side; the sequence is RRPKAFFPRV. Residues 179–199 form a helical membrane-spanning segment; that stretch reads FVFRALLMVLVFLLVVSYWLF. Residues 200–218 are Extracellular-facing; sequence YGVRILESRDKNYQGIVQY. Residues 219–239 traverse the membrane as a helical segment; that stretch reads AVSLVDALLFVHYLAVVLLEL. Residues 240-521 are Cytoplasmic-facing; the sequence is RQLQPQFTIK…VMRLQSETSV (282 aa). The PDZ-binding signature appears at 518–521; the sequence is ETSV.

The protein belongs to the Vang family. In terms of assembly, interacts with dvl/dsh. Interacts with prickle3. During gastrulation, broadly expressed throughout the marginal zone and animal cap region. From the neurula stages, expression becomes concentrated in neural tissues, in the neural plate and neural tube.

The protein localises to the cell membrane. Functionally, has a role in non-canonical Wnt/planar cell polarity (PCP) signaling; can recruit dvl/dsh and prickle from the cytoplasm to the plasma membrane. Acts in a PCP complex to regulate the polarized assembly of fibronectrin on the surface of the mesoderm during gastrulation. Regulates convergent extension cell movements in both dorsal mesoderm and neural tissue during gastrulation, without affecting cell fate. Regulates neural fold closure during neurulation. May be required for cell surface localization of fzd3 and fzd6 in the inner ear. The sequence is that of Vang-like protein 2-A (vangl2-a) from Xenopus laevis (African clawed frog).